A 122-amino-acid polypeptide reads, in one-letter code: ATP synthase epsilon chain (122 aa).

This sequence belongs to the ATPase epsilon chain family. In terms of assembly, F-type ATPases have 2 components, CF(1) - the catalytic core - and CF(0) - the membrane proton channel. CF(1) has five subunits: alpha(3), beta(3), gamma(1), delta(1), epsilon(1). CF(0) has three main subunits: a, b and c.

The protein resides in the cell membrane. Its function is as follows. Produces ATP from ADP in the presence of a proton gradient across the membrane. The sequence is that of ATP synthase epsilon chain from Rhodococcus jostii (strain RHA1).